Consider the following 59-residue polypeptide: Large ribosomal subunit protein uL30 (59 aa).

The protein belongs to the universal ribosomal protein uL30 family. As to quaternary structure, part of the 50S ribosomal subunit.

In Macrococcus caseolyticus (strain JCSC5402) (Macrococcoides caseolyticum), this protein is Large ribosomal subunit protein uL30.